The following is a 333-amino-acid chain: CMP-N-acetylneuraminate-beta-galactosamide-alpha-2,3-sialyltransferase 4 (333 aa).

The Cytoplasmic segment spans residues 1–8 (MTSKSHWK). A helical; Signal-anchor for type II membrane protein membrane pass occupies residues 9–26 (LLALALVLVVVMVWYSIS). Over 27–333 (REDRYIEFFY…MGAVKNLTYF (307 aa)) the chain is Lumenal. Asn-61, Asn-131, Asn-310, and Asn-329 each carry an N-linked (GlcNAc...) asparagine glycan. An intrachain disulfide couples Cys-120 to Cys-273.

It belongs to the glycosyltransferase 29 family.

The protein resides in the golgi apparatus. Its subcellular location is the golgi stack membrane. The catalysed reaction is a beta-D-galactosyl-(1-&gt;3)-N-acetyl-beta-D-galactosaminyl derivative + CMP-N-acetyl-beta-neuraminate = an N-acetyl-alpha-neuraminyl-(2-&gt;3)-beta-D-galactosyl-(1-&gt;3)-N-acetyl-beta-D-galactosaminyl derivative + CMP + H(+). The enzyme catalyses a beta-D-galactosyl-(1-&gt;3)-N-acetyl-alpha-D-galactosaminyl derivative + CMP-N-acetyl-beta-neuraminate = an N-acetyl-alpha-neuraminyl-(2-&gt;3)-beta-D-galactosyl-(1-&gt;3)-N-acetyl-alpha-D-galactosaminyl derivative + CMP + H(+). It carries out the reaction a beta-D-galactosyl-(1-&gt;4)-N-acetyl-beta-D-glucosaminyl derivative + CMP-N-acetyl-beta-neuraminate = an N-acetyl-alpha-neuraminyl-(2-&gt;3)-beta-D-galactosyl-(1-&gt;4)-N-acetyl-beta-D-glucosaminyl derivative + CMP + H(+). It catalyses the reaction a ganglioside GM1 (d18:1(4E)) + CMP-N-acetyl-beta-neuraminate = a ganglioside GD1a (d18:1(4E)) + CMP + H(+). The catalysed reaction is a ganglioside GA1 (d18:1(4E)) + CMP-N-acetyl-beta-neuraminate = a ganglioside GM1b (d18:1(4E)) + CMP + H(+). The enzyme catalyses a ganglioside GT1c (d18:1(4E)) + CMP-N-acetyl-beta-neuraminate = a ganglioside GQ1c (d18:1(4E)) + CMP + H(+). It carries out the reaction a neolactoside nLc4Cer + CMP-N-acetyl-beta-neuraminate = a neolactoside IV(3)-alpha-NeuAc-nLc4Cer + CMP + H(+). It catalyses the reaction a neolactoside nLc4Cer(d18:1(4E)) + CMP-N-acetyl-beta-neuraminate = a neolactoside IV(3)-alpha-NeuAc-nLc4Cer(d18:1(4E)) + CMP + H(+). The protein operates within protein modification; protein glycosylation. Its pathway is glycolipid biosynthesis. In terms of biological role, a beta-galactoside alpha2-3 sialyltransferase involved in terminal sialylation of glycoproteins and glycolipids. Catalyzes the transfer of sialic acid (N-acetyl-neuraminic acid; Neu5Ac) from the nucleotide sugar donor CMP-Neu5Ac onto acceptor Galbeta-(1-&gt;3)-GalNAc- and Galbeta-(1-&gt;4)-GlcNAc-terminated glycoconjugates through an alpha2-3 linkage. Plays a major role in hemostasis. Responsible for sialylation of plasma VWF/von Willebrand factor, preventing its recognition by asialoglycoprotein receptors (ASGPR) and subsequent clearance. Regulates ASGPR-mediated clearance of platelets. Participates in the biosynthesis of the sialyl Lewis X epitopes, both on O- and N-glycans, which are recognized by SELE/E-selectin, SELP/P-selectin and SELL/L-selectin. Essential for selectin-mediated rolling and adhesion of leukocytes during extravasation. Contributes to adhesion and transendothelial migration of neutrophils likely through terminal sialylation of CXCR2. In glycosphingolipid biosynthesis, sialylates GM1 and GA1 gangliosides to form GD1a and GM1b, respectively. Metabolizes brain c-series ganglioside GT1c forming GQ1c. Synthesizes ganglioside LM1 (IV3Neu5Ac-nLc4Cer), a major structural component of peripheral nerve myelin. This chain is CMP-N-acetylneuraminate-beta-galactosamide-alpha-2,3-sialyltransferase 4 (St3gal4), found in Rattus norvegicus (Rat).